The primary structure comprises 1517 residues: Neurite extension and migration factor (1517 aa).

Basic and acidic residues predominate over residues Asp-381 to Glu-405. 7 disordered regions span residues Asp-381–Gly-416, Val-505–Arg-529, Ser-644–Gly-697, Lys-732–Glu-775, Arg-1065–Ser-1084, Asp-1161–Lys-1228, and Ala-1372–Asp-1422. The segment covering Ser-644–Ala-663 has biased composition (polar residues). The span at Ser-678–Ala-687 shows a compositional bias: low complexity. Over residues Thr-764 to Met-773 the composition is skewed to polar residues.

Its subcellular location is the nucleus. It is found in the cytoplasm. In terms of biological role, involved in neurite outgrowth by regulating cell-cell adhesion via the N-cadherin signaling pathway. May act by regulating expression of protein-coding genes, such as N-cadherins and integrin beta-1 (ITGB1). This chain is Neurite extension and migration factor, found in Rattus norvegicus (Rat).